The following is a 492-amino-acid chain: Transmembrane protein 39B (492 aa).

The tract at residues 1–53 (MGGRRGPNRTSYYRNPLCEPGSSGASGGGHSSSASVSSVRSRSRTTSGTGLSS) is disordered. Residue Asn-8 is glycosylated (N-linked (GlcNAc...) asparagine). The span at 31 to 53 (SSSASVSSVRSRSRTTSGTGLSS) shows a compositional bias: low complexity. The next 8 membrane-spanning stretches (helical) occupy residues 77-97 (SILF…VHYI), 115-135 (TSLN…IVLG), 153-175 (SLFR…GWSL), 185-205 (TYSF…IPFL), 288-308 (EVLV…VWFV), 322-342 (LFLL…LPAS), 421-441 (ILNI…YSLM), and 447-467 (HQTI…FKLL).

It belongs to the TMEM39 family.

The protein localises to the endoplasmic reticulum membrane. May protect the cells against DNA damage caused by exposure to the cold-warming stress and facilitates tissue damage repair during the recovery phase. In Mus musculus (Mouse), this protein is Transmembrane protein 39B.